A 105-amino-acid polypeptide reads, in one-letter code: Mitochondrial import inner membrane translocase subunit tim14 (105 aa).

The Mitochondrial intermembrane portion of the chain corresponds to 1 to 3 (MAS). A helical membrane pass occupies residues 4–23 (TFAIGLGVATAAFLGRAGYV). Topologically, residues 24-105 (ALRRYQGGIN…EAKEFLDKHI (82 aa)) are mitochondrial matrix. One can recognise a J domain in the interval 52–105 (EAALILELPERTLNKEKVRKKHRQLMLLNHPDRGGSPYLATKINEAKEFLDKHI).

It belongs to the TIM14 family. As to quaternary structure, heterodimer with PAM18/pamR. Component of the PAM complex, at least composed of mtHsp70, MGE1/mgeA, tim44, PAM16/pamP, PAM17/pamQ and PAM18/pamR.

Its subcellular location is the mitochondrion inner membrane. Essential component of the PAM complex, a complex required for the translocation of transit peptide-containing proteins from the inner membrane into the mitochondrial matrix in an ATP-dependent manner. In the complex, it is required to stimulate activity of mtHSP70 (SSC1/sscA). This is Mitochondrial import inner membrane translocase subunit tim14 (pam18) from Aspergillus fumigatus (strain ATCC MYA-4609 / CBS 101355 / FGSC A1100 / Af293) (Neosartorya fumigata).